Reading from the N-terminus, the 703-residue chain is Fanconi-associated nuclease 1 homolog (703 aa).

Mn(2+) contacts are provided by Glu529, Asp651, Glu666, and Val667. The 102-residue stretch at 597–698 (YIREHQRKTF…EVDVEVCHVS (102 aa)) folds into the VRR-NUC domain.

Belongs to the FAN1 family. The cofactor is Mn(2+). It depends on Mg(2+) as a cofactor.

Its subcellular location is the nucleus. It catalyses the reaction Hydrolytically removes 5'-nucleotides successively from the 3'-hydroxy termini of 3'-hydroxy-terminated oligonucleotides.. Functionally, nuclease required for the repair of DNA interstrand cross-links (ICL). Acts as a 5'-3' exonuclease that anchors at a cut end of DNA and cleaves DNA successively at every third nucleotide, allowing to excise an ICL from one strand through flanking incisions. This Schizosaccharomyces pombe (strain 972 / ATCC 24843) (Fission yeast) protein is Fanconi-associated nuclease 1 homolog.